Reading from the N-terminus, the 319-residue chain is Olfactory receptor 8K1 (319 aa).

Topologically, residues 1-31 are extracellular; it reads MNHVVKHNHTAVTKVTEFILMGITDNPGLQA. Asn8 carries an N-linked (GlcNAc...) asparagine glycan. Residues 32–52 form a helical membrane-spanning segment; sequence PLFGLFLIIYLVTVIGNLGMV. The Cytoplasmic segment spans residues 53-60; that stretch reads ILTYLDSK. A helical transmembrane segment spans residues 61-81; the sequence is LHTPMYFFLRHLSITDLGYST. Residues 82 to 105 are Extracellular-facing; sequence VIAPKMLVNFIVHKNTISYNWYAT. A helical membrane pass occupies residues 106–126; it reads QLAFFEIFIISELFILSAMAY. Residues 127-145 are Cytoplasmic-facing; sequence DRYVAICKPLLYVIIMAEK. Residues 146 to 166 form a helical membrane-spanning segment; it reads VLWVLVIVPYLYSTFVSLFLT. Topologically, residues 167 to 203 are extracellular; the sequence is IKLFKLSFCGSNIISYFYCDCIPLMSILCSDTNELEL. The chain crosses the membrane as a helical span at residues 204–223; sequence IILIFSGCNLLFSLSIVLIS. At 224–243 the chain is on the cytoplasmic side; the sequence is YMFILVAILRMNSRKGRYKA. Residues 244-264 traverse the membrane as a helical segment; that stretch reads FSTCSSHLTVVIMFYGTLLFI. The Extracellular segment spans residues 265 to 277; it reads YLQPKSSHTLAID. A helical membrane pass occupies residues 278–298; it reads KMASVFYTLLIPMLNPLIYSL. The Cytoplasmic portion of the chain corresponds to 299-319; sequence RNKEVKDALKRTLTNRFKIPI.

It belongs to the G-protein coupled receptor 1 family.

It localises to the cell membrane. Its function is as follows. Odorant receptor. In Homo sapiens (Human), this protein is Olfactory receptor 8K1 (OR8K1).